Here is a 557-residue protein sequence, read N- to C-terminus: Membrane protein insertase YidC (557 aa).

The chain crosses the membrane as a helical span at residues 1-21 (MNWLRNSLIAAILVITYVLFI). A disordered region spans residues 52-71 (SDDAVASSATEESDVPEVSV). 5 helical membrane passes run 346 to 366 (TIDY…LDFI), 369 to 389 (LVGN…AVFF), 439 to 459 (FGGC…YWMI), 470 to 490 (FFLW…PLLM), and 517 to 537 (PIGF…YWVV).

This sequence belongs to the OXA1/ALB3/YidC family. Type 1 subfamily. In terms of assembly, interacts with the Sec translocase complex via SecD. Specifically interacts with transmembrane segments of nascent integral membrane proteins during membrane integration.

It is found in the cell inner membrane. Its function is as follows. Required for the insertion and/or proper folding and/or complex formation of integral membrane proteins into the membrane. Involved in integration of membrane proteins that insert both dependently and independently of the Sec translocase complex, as well as at least some lipoproteins. Aids folding of multispanning membrane proteins. This Saccharophagus degradans (strain 2-40 / ATCC 43961 / DSM 17024) protein is Membrane protein insertase YidC.